The primary structure comprises 692 residues: Zinc finger protein 180 (692 aa).

Positions 72 to 145 (VNFKIVTVDF…GVKIERFTRD (74 aa)) constitute a KRAB domain. Glycyl lysine isopeptide (Lys-Gly) (interchain with G-Cter in SUMO2) cross-links involve residues K138, K159, K168, K191, K198, K226, K304, K313, and K330. 12 C2H2-type zinc fingers span residues 353–375 (FECN…QRTH), 381–403 (YECS…QRTH), 409–431 (YRCN…QRTH), 437–459 (YECN…QRTH), 465–487 (YECN…QRIH), 493–515 (YECN…QRTH), 521–543 (FECN…QRTH), 549–571 (YECS…QRIH), 577–599 (YECN…QRTH), 605–627 (YECS…QRTH), 633–655 (FECN…QRTH), and 661–683 (FTCI…QATH).

This sequence belongs to the krueppel C2H2-type zinc-finger protein family.

Its subcellular location is the nucleus. May be involved in transcriptional regulation. This Homo sapiens (Human) protein is Zinc finger protein 180 (ZNF180).